The chain runs to 522 residues: Transactivator/viroplasmin protein (522 aa).

Residues 488 to 522 form a disordered region; the sequence is DASADEGTTDKSGPPPTRSIVEKEDVPNTSSKQVD.

Belongs to the caulimoviridae viroplasmin family.

The protein localises to the host cytoplasm. Its function is as follows. Enhances the ribosomal termination-reinitiation event leading to the translation of major open reading frames on the polycistronic viral RNAs. The polypeptide is Transactivator/viroplasmin protein (Cauliflower mosaic virus (strain D/H) (CaMV)).